The primary structure comprises 62 residues: Large ribosomal subunit protein eL37 (62 aa).

4 residues coordinate Zn(2+): Cys-20, Cys-23, Cys-35, and Cys-38. The C4-type zinc finger occupies Cys-20–Cys-38.

The protein belongs to the eukaryotic ribosomal protein eL37 family. The cofactor is Zn(2+).

Functionally, binds to the 23S rRNA. In Aeropyrum pernix (strain ATCC 700893 / DSM 11879 / JCM 9820 / NBRC 100138 / K1), this protein is Large ribosomal subunit protein eL37 (rpl37e).